The following is a 399-amino-acid chain: Beta-1,4-galactosyltransferase 1 (399 aa).

At 1–24 (MRFREQFLGGSAAMPGATLQRACR) the chain is on the cytoplasmic side. Residues 25–44 (LLVAVCALHLGVTLVYYLSG) traverse the membrane as a helical; Signal-anchor for type II membrane protein segment. At 45 to 399 (RDLSRLPQLV…QITVDIGTPR (355 aa)) the chain is on the lumenal side. The tract at residues 61–113 (QGGTNGAAASKQPPGEQRPRGARPPPPLGVSPKPRPGLDSSPGAASGPGLKSN) is disordered. A compositionally biased stretch (pro residues) spans 82-95 (ARPPPPLGVSPKPR). N-linked (GlcNAc...) asparagine glycosylation is present at Asn-113. Cys-131 and Cys-173 are oxidised to a cystine. UDP-alpha-D-galactose contacts are provided by residues 184-188 (PFRNR), 223-225 (FNR), 250-251 (VD), and Trp-311. Cys-244 and Cys-263 are oxidised to a cystine. Residue Asp-251 participates in Mn(2+) binding. 313–316 (GEDD) serves as a coordination point for N-acetyl-D-glucosamine. His-344 serves as a coordination point for Mn(2+). A UDP-alpha-D-galactose-binding site is contributed by 344-346 (HSR). Arg-356 contributes to the N-acetyl-D-glucosamine binding site.

The protein belongs to the glycosyltransferase 7 family. As to quaternary structure, homodimer; and heterodimer with alpha-lactalbumin to form lactose synthase. Interacts (via N-terminal cytoplasmic domain) with UBE2Q1 (via N-terminus); the interaction is direct. Mn(2+) serves as cofactor. The soluble form derives from the membrane forms by proteolytic processing.

It is found in the golgi apparatus. The protein resides in the golgi stack membrane. It localises to the cell membrane. Its subcellular location is the cell surface. The protein localises to the cell projection. It is found in the filopodium. The protein resides in the secreted. It catalyses the reaction D-glucose + UDP-alpha-D-galactose = lactose + UDP + H(+). The enzyme catalyses an N-acetyl-beta-D-glucosaminyl derivative + UDP-alpha-D-galactose = a beta-D-galactosyl-(1-&gt;4)-N-acetyl-beta-D-glucosaminyl derivative + UDP + H(+). The catalysed reaction is N-acetyl-D-glucosamine + UDP-alpha-D-galactose = beta-D-galactosyl-(1-&gt;4)-N-acetyl-D-glucosamine + UDP + H(+). It carries out the reaction a beta-D-GlcNAc-(1-&gt;3)-beta-D-Gal-(1-&gt;4)-beta-D-Glc-(1&lt;-&gt;1)-Cer(d18:1(4E)) + UDP-alpha-D-galactose = a neolactoside nLc4Cer(d18:1(4E)) + UDP + H(+). It catalyses the reaction a beta-D-glucosylceramide + UDP-alpha-D-galactose = a beta-D-galactosyl-(1-&gt;4)-beta-D-glucosyl-(1&lt;-&gt;1)-ceramide + UDP + H(+). The enzyme catalyses a neolactoside IV(3)-beta-GlcNAc-nLc4Cer + UDP-alpha-D-galactose = a neolactoside nLc6Cer + UDP + H(+). It participates in protein modification; protein glycosylation. The Golgi complex form catalyzes the production of lactose in the lactating mammary gland and could also be responsible for the synthesis of complex-type N-linked oligosaccharides in many glycoproteins as well as the carbohydrate moieties of glycolipids. In terms of biological role, the cell surface form functions as a recognition molecule during a variety of cell to cell and cell to matrix interactions, as those occurring during development and egg fertilization, by binding to specific oligosaccharide ligands on opposing cells or in the extracellular matrix. The secreted form is responsible for the synthesis of complex-type to N-linked oligosaccharides in many glycoproteins as well as the carbohydrate moieties of glycolipids. This is Beta-1,4-galactosyltransferase 1 from Mus musculus (Mouse).